The chain runs to 336 residues: MIKIAINGYGRIGRNVLRALYESGRDKNIKIVAINELAAPEAMVHLTRFDTSHGRFHHPVQLAGNSMLVGEDLISLFAERDPSRLPWRALGVDVVLDCTGVFGSRADAELHLAAGAGKVLFSHPAEADVDATIVYGVNHQVLTGRERIVSNASCTTNCVVPVIETLHREFEINCGTITTIHSAMHDQQVIDAYHSDLRRTRAASQSIIPVDTKLAKGLERILPHFAGKFEAIAVRVPTINVTAMDLSITVRKKVTVTDVNQALQRASRGTLSGILDYTEEPLVSVDFNHDAHSCIIDGTQTRVSDANLVKMLMWCDNEWGFANRMLDTTRAMMAAG.

Residues 11–12 (RI) and Arg80 each bind NAD(+). Substrate contacts are provided by residues 153–155 (SCT), Arg199, 212–213 (TK), and Arg235. Residue Cys154 is the Nucleophile of the active site. Residue Asn317 participates in NAD(+) binding.

It belongs to the glyceraldehyde-3-phosphate dehydrogenase family. Epd subfamily. Homotetramer.

It is found in the cytoplasm. It catalyses the reaction D-erythrose 4-phosphate + NAD(+) + H2O = 4-phospho-D-erythronate + NADH + 2 H(+). It functions in the pathway cofactor biosynthesis; pyridoxine 5'-phosphate biosynthesis; pyridoxine 5'-phosphate from D-erythrose 4-phosphate: step 1/5. Functionally, catalyzes the NAD-dependent conversion of D-erythrose 4-phosphate to 4-phosphoerythronate. The chain is D-erythrose-4-phosphate dehydrogenase from Aeromonas hydrophila subsp. hydrophila (strain ATCC 7966 / DSM 30187 / BCRC 13018 / CCUG 14551 / JCM 1027 / KCTC 2358 / NCIMB 9240 / NCTC 8049).